Consider the following 99-residue polypeptide: Nucleoid-associated protein EbfC (99 aa).

This sequence belongs to the YbaB/EbfC family. As to quaternary structure, homodimer.

It is found in the cytoplasm. The protein resides in the nucleoid. Binds to DNA and alters its conformation. May be involved in regulation of gene expression, nucleoid organization and DNA protection. The protein is Nucleoid-associated protein EbfC of Borreliella afzelii (strain PKo) (Borrelia afzelii).